The chain runs to 114 residues: Adapter SH3BGRL (114 aa).

The segment at 13-50 is required for interaction with HER2; sequence SMAIKKKQQDVLGFLEANKIGFEEKDIAANEENRKWMR. Residues 54–71 form a required for interaction with PFN1, HER2, and ATG12 region; it reads PENSRPATGYPLPPQIFN. An SH3-binding motif is present at residues 61 to 67; that stretch reads TGYPLPP.

Belongs to the SH3BGR family. As to quaternary structure, monomer. Interacts with PFN1/Profilin-1. Interacts with ERBB2. Interacts with ATG12. Interacts with BECN1. Interacts with translating ribosomes.

It is found in the cytoplasm. It localises to the cytosol. The protein resides in the cell membrane. In terms of biological role, appears to function as an adapter protein that bridges proteins together or proteins with mRNAs. May function as a ubiquitin ligase-substrate adapter. Additionally, associates with translating cytoplasmic ribosomes and may promote the expression of specific mRNAs. This Bos taurus (Bovine) protein is Adapter SH3BGRL (SH3BGRL).